We begin with the raw amino-acid sequence, 383 residues long: MTEVEAKATATEETTKEEEEAPETTAEQTEESAQETSENVSKLEASTIRQLEYYFGDANLARDKFLQEQISKDEGWVPVDVLLTFKRLKSLSEDKKVIVDAIEKSDEGLIEVSEDREKLRRHPERPLPEQNEETRKEIYGRTVYVKGFAPEEGTQMSELLEFFEPFEKITNIVMRKYHDKATKKYLFKGSVFVTFATKDHCAEFLKKEKLGYKGKELIRKMQDDYFEEKKAERRKKDKKKEEDRFNIDHLPKGASVHLSGFNKDTSRETIKETILKLDESLEVAFIDYAKTDTEGTVRFAADDAGKKFMEKLTDSKIQIDEEEITARLLEGDEEKEFLRKVVKDQQARRQASNARNKGRTPEGRQASRPPQEWRRKAKGGRGE.

The tract at residues 1–43 (MTEVEAKATATEETTKEEEEAPETTAEQTEESAQETSENVSKL) is disordered. Positions 15–33 (TKEEEEAPETTAEQTEESA) are enriched in acidic residues. An HTH La-type RNA-binding domain is found at 37 to 129 (SENVSKLEAS…RRHPERPLPE (93 aa)). The RRM domain occupies 141-228 (RTVYVKGFAP…RKMQDDYFEE (88 aa)). The xRRM domain maps to 249–368 (HLPKGASVHL…RTPEGRQASR (120 aa)). The interval 343-383 (KDQQARRQASNARNKGRTPEGRQASRPPQEWRRKAKGGRGE) is disordered.

Its subcellular location is the nucleus. The protein localises to the cytoplasm. Functionally, may be involved in transcription termination by RNA polymerase III. Binds RNA and DNA. Binds to the 3' end of the minus strand of Sindbis virus RNA. This may be significant for Sindbis virus RNA replication. This chain is La protein homolog, found in Aedes albopictus (Asian tiger mosquito).